The chain runs to 498 residues: Polyamine aminopropyltransferase (498 aa).

Helical transmembrane passes span 7 to 27, 35 to 55, 67 to 87, 97 to 117, 134 to 154, and 163 to 183; these read ISVL…GTIA, VTQF…GSWL, FLEI…ILYL, IPLF…IPVL, VLSL…IFFA, and GFIF…VLPL. Positions 196–446 are spermidine synthase; that stretch reads VVVLTLLILG…AGQRPIQFKK (251 aa). A PABS domain is found at 200-439; sequence TLLILGFSYS…GEWGFVLAGQ (240 aa). Gln-234 provides a ligand contact to S-methyl-5'-thioadenosine. Spermidine contacts are provided by His-264 and Asp-288. S-methyl-5'-thioadenosine-binding positions include Asp-308 and 342 to 343; that span reads DA. Catalysis depends on Asp-360, which acts as the Proton acceptor.

It belongs to the spermidine/spermine synthase family. Homodimer or homotetramer.

Its subcellular location is the cell membrane. The catalysed reaction is S-adenosyl 3-(methylsulfanyl)propylamine + putrescine = S-methyl-5'-thioadenosine + spermidine + H(+). The protein operates within amine and polyamine biosynthesis; spermidine biosynthesis; spermidine from putrescine: step 1/1. Functionally, catalyzes the irreversible transfer of a propylamine group from the amino donor S-adenosylmethioninamine (decarboxy-AdoMet) to putrescine (1,4-diaminobutane) to yield spermidine. In Leptospira interrogans serogroup Icterohaemorrhagiae serovar copenhageni (strain Fiocruz L1-130), this protein is Polyamine aminopropyltransferase.